An 801-amino-acid chain; its full sequence is U-box domain-containing protein 44 (801 aa).

A U-box domain is found at 22 to 101 (HIYEAFICPL…EEWRSRNDAA (80 aa)). ARM repeat units lie at residues 134–173 (RSNR…VVVE), 176–215 (DESK…ELSK), 218–259 (ALCE…NMER), 261–300 (EEIV…ELPL), 301–340 (NNDV…KISS), 342–386 (EGSA…NIVN), 390–429 (DFDK…GLTS), 435–475 (PKVV…NLSP), and 480–521 (ELAK…ELPD).

Interacts with AAO3. Binds to SD129. As to expression, expressed in leaves, root vasculature and guard cells.

The enzyme catalyses S-ubiquitinyl-[E2 ubiquitin-conjugating enzyme]-L-cysteine + [acceptor protein]-L-lysine = [E2 ubiquitin-conjugating enzyme]-L-cysteine + N(6)-ubiquitinyl-[acceptor protein]-L-lysine.. It functions in the pathway protein modification; protein ubiquitination. Its function is as follows. Functions as an E3 ubiquitin-protein ligase. Prevents premature senescence probably by targeting proteins involved in this process for degradation. Promotes the degradation of AAO3 and thus represses abscisic acid (ABA) biosynthesis. The polypeptide is U-box domain-containing protein 44 (PUB44) (Arabidopsis thaliana (Mouse-ear cress)).